We begin with the raw amino-acid sequence, 227 residues long: Zinc finger protein ZAT10 (227 aa).

A C2H2-type 1 zinc finger spans residues 80 to 102; sequence YKCSVCDKTFSSYQALGGHKASH. The tract at residues 96-128 is disordered; that stretch reads GGHKASHRKNLSQTLSGGGDDHSTSSATTTSAV. Low complexity predominate over residues 119–128; it reads TSSATTTSAV. The C2H2-type 2 zinc-finger motif lies at 136-158; the sequence is HVCTICNKSFPSGQALGGHKRCH. A disordered region spans residues 168 to 189; that stretch reads SSVSNSEGAGSTSHVSSSHRGF. Over residues 174–186 the composition is skewed to polar residues; sequence EGAGSTSHVSSSH.

In terms of tissue distribution, expressed in roots, stems and leaves.

The protein resides in the nucleus. In terms of biological role, transcriptional repressor involved in abiotic stress responses. Can repress the stress responsive genes DREB1A and LTI78. Probably involved in jasmonate (JA) early signaling response. May regulate the expression of the JA biosynthesis gene LOX3 and control the expression of TIFY10A/JAZ1, a key repressor in the JA signaling cascade. The chain is Zinc finger protein ZAT10 (ZAT10) from Arabidopsis thaliana (Mouse-ear cress).